The sequence spans 299 residues: Large ribosomal subunit protein uL18 (299 aa).

The protein belongs to the universal ribosomal protein uL18 family. In terms of assembly, component of the large ribosomal subunit (LSU).

Its subcellular location is the cytoplasm. The protein localises to the nucleus. Its function is as follows. Component of the ribosome, a large ribonucleoprotein complex responsible for the synthesis of proteins in the cell. The small ribosomal subunit (SSU) binds messenger RNAs (mRNAs) and translates the encoded message by selecting cognate aminoacyl-transfer RNA (tRNA) molecules. The large subunit (LSU) contains the ribosomal catalytic site termed the peptidyl transferase center (PTC), which catalyzes the formation of peptide bonds, thereby polymerizing the amino acids delivered by tRNAs into a polypeptide chain. The nascent polypeptides leave the ribosome through a tunnel in the LSU and interact with protein factors that function in enzymatic processing, targeting, and the membrane insertion of nascent chains at the exit of the ribosomal tunnel. The chain is Large ribosomal subunit protein uL18 (RpL5) from Bombyx mori (Silk moth).